The sequence spans 344 residues: Ferrochelatase (344 aa).

The Fe cation site is built by His-196 and Glu-277.

Belongs to the ferrochelatase family.

The protein resides in the cytoplasm. The enzyme catalyses heme b + 2 H(+) = protoporphyrin IX + Fe(2+). It functions in the pathway porphyrin-containing compound metabolism; protoheme biosynthesis; protoheme from protoporphyrin-IX: step 1/1. In terms of biological role, catalyzes the ferrous insertion into protoporphyrin IX. The sequence is that of Ferrochelatase from Synechococcus sp. (strain JA-2-3B'a(2-13)) (Cyanobacteria bacterium Yellowstone B-Prime).